A 351-amino-acid polypeptide reads, in one-letter code: Very-long-chain 3-oxoacyl-CoA reductase (351 aa).

The chain crosses the membrane as a helical span at residues 26 to 46 (LLWCAFTVGAVKLTTFMLSLI). The NADP(+) site is built by Leu-72, Asp-126, Asn-153, Tyr-225, Lys-229, Val-258, and Ser-260. The active-site Proton donor is Tyr-225. Lys-229 (lowers pKa of active site Tyr) is an active-site residue.

The protein belongs to the short-chain dehydrogenases/reductases (SDR) family.

It localises to the endoplasmic reticulum membrane. The catalysed reaction is a very-long-chain (3R)-3-hydroxyacyl-CoA + NADP(+) = a very-long-chain 3-oxoacyl-CoA + NADPH + H(+). The protein operates within lipid metabolism; fatty acid biosynthesis. Component of the microsomal membrane bound fatty acid elongation system, which produces the 26-carbon very long-chain fatty acids (VLCFA) from palmitate. Catalyzes the reduction of the 3-ketoacyl-CoA intermediate that is formed in each cycle of fatty acid elongation. VLCFAs serve as precursors for ceramide and sphingolipids. The polypeptide is Very-long-chain 3-oxoacyl-CoA reductase (Eremothecium gossypii (strain ATCC 10895 / CBS 109.51 / FGSC 9923 / NRRL Y-1056) (Yeast)).